A 437-amino-acid polypeptide reads, in one-letter code: Enolase 2 (437 aa).

H160 and E169 together coordinate substrate. E212 functions as the Proton donor in the catalytic mechanism. Residues D247, E296, and D321 each contribute to the Mg(2+) site. 2 residues coordinate substrate: E296 and D321. The Proton acceptor role is filled by K346. Residues 373 to 376 (SHRS) and K397 each bind substrate.

Belongs to the enolase family. In terms of assembly, homodimer. Requires Mg(2+) as cofactor.

It localises to the cytoplasm. The catalysed reaction is (2R)-2-phosphoglycerate = phosphoenolpyruvate + H2O. Its pathway is carbohydrate degradation; glycolysis; pyruvate from D-glyceraldehyde 3-phosphate: step 4/5. The protein is Enolase 2 (ENO2) of Candida glabrata (strain ATCC 2001 / BCRC 20586 / JCM 3761 / NBRC 0622 / NRRL Y-65 / CBS 138) (Yeast).